Reading from the N-terminus, the 161-residue chain is MSVVSQVILRADDELRYPSSGELSGIKNFLATGAVRIRIAEALADNEKKIVDQAQKQLFSIHPEYRTSGGNAATTKQYNQCLRDYGWYLRLVTYGILAGDKDPIERIGLIGVKEMYNALGVPVPGMVDAIRCLKDAALGVLDSEEARIAAPYFDFITQAMS.

The residue at position 71 (Asn71) is an N4-methylasparagine. Cys81 lines the (2R,3E)-phycocyanobilin pocket.

This sequence belongs to the phycobiliprotein family. Heterodimer of an alpha-B and a beta chain forming AP-B. In terms of processing, contains one covalently linked bilin chromophore. The chromophore is added by phycocyanobilin lyase CpcUS.

It is found in the cellular thylakoid membrane. A variant alpha-allophycocyanin (AP) which forms a complex with beta-AP with maximum absorption at approximately 670 nanometers. It is an important phycobilisome terminal emitter involved in energy transfer to photosystem I. The protein is Allophycocyanin subunit alpha-B (apcD) of Picosynechococcus sp. (strain ATCC 27264 / PCC 7002 / PR-6) (Agmenellum quadruplicatum).